Here is a 487-residue protein sequence, read N- to C-terminus: Glycogen synthase (487 aa).

K15 is a binding site for ADP-alpha-D-glucose.

The protein belongs to the glycosyltransferase 1 family. Bacterial/plant glycogen synthase subfamily.

It carries out the reaction [(1-&gt;4)-alpha-D-glucosyl](n) + ADP-alpha-D-glucose = [(1-&gt;4)-alpha-D-glucosyl](n+1) + ADP + H(+). It functions in the pathway glycan biosynthesis; glycogen biosynthesis. Its function is as follows. Synthesizes alpha-1,4-glucan chains using ADP-glucose. The protein is Glycogen synthase of Leptothrix cholodnii (strain ATCC 51168 / LMG 8142 / SP-6) (Leptothrix discophora (strain SP-6)).